The primary structure comprises 405 residues: Phosphopentomutase (405 aa).

Positions 10, 303, 308, 344, 345, and 356 each coordinate Mn(2+).

Belongs to the phosphopentomutase family. Mn(2+) serves as cofactor.

Its subcellular location is the cytoplasm. The enzyme catalyses 2-deoxy-alpha-D-ribose 1-phosphate = 2-deoxy-D-ribose 5-phosphate. It catalyses the reaction alpha-D-ribose 1-phosphate = D-ribose 5-phosphate. It participates in carbohydrate degradation; 2-deoxy-D-ribose 1-phosphate degradation; D-glyceraldehyde 3-phosphate and acetaldehyde from 2-deoxy-alpha-D-ribose 1-phosphate: step 1/2. Functionally, isomerase that catalyzes the conversion of deoxy-ribose 1-phosphate (dRib-1-P) and ribose 1-phosphate (Rib-1-P) to deoxy-ribose 5-phosphate (dRib-5-P) and ribose 5-phosphate (Rib-5-P), respectively. In Shewanella denitrificans (strain OS217 / ATCC BAA-1090 / DSM 15013), this protein is Phosphopentomutase.